The chain runs to 385 residues: 1-deoxy-D-xylulose 5-phosphate reductoisomerase 1 (385 aa).

NADPH contacts are provided by threonine 11, glycine 12, serine 13, isoleucine 14, asparagine 39, and asparagine 122. Lysine 123 lines the 1-deoxy-D-xylulose 5-phosphate pocket. Position 124 (glutamate 124) interacts with NADPH. Residue aspartate 148 participates in Mn(2+) binding. 4 residues coordinate 1-deoxy-D-xylulose 5-phosphate: serine 149, glutamate 150, serine 174, and histidine 197. Residue glutamate 150 coordinates Mn(2+). An NADPH-binding site is contributed by glycine 203. Residues serine 210, asparagine 215, lysine 216, and glutamate 219 each contribute to the 1-deoxy-D-xylulose 5-phosphate site. Glutamate 219 provides a ligand contact to Mn(2+).

Belongs to the DXR family. The cofactor is Mg(2+). It depends on Mn(2+) as a cofactor.

It carries out the reaction 2-C-methyl-D-erythritol 4-phosphate + NADP(+) = 1-deoxy-D-xylulose 5-phosphate + NADPH + H(+). It participates in isoprenoid biosynthesis; isopentenyl diphosphate biosynthesis via DXP pathway; isopentenyl diphosphate from 1-deoxy-D-xylulose 5-phosphate: step 1/6. Catalyzes the NADPH-dependent rearrangement and reduction of 1-deoxy-D-xylulose-5-phosphate (DXP) to 2-C-methyl-D-erythritol 4-phosphate (MEP). The polypeptide is 1-deoxy-D-xylulose 5-phosphate reductoisomerase 1 (Bacillus thuringiensis subsp. konkukian (strain 97-27)).